Reading from the N-terminus, the 430-residue chain is MSIESWTAPVASTPVQANVTIPGSKSQTNRALMLAALAAAQGQGTSTIGGALRSRDTELMISALRTLGLHVDEAGSVLTVNGRITPGEDAQVDCGLAGTVLRFVPPLAALSANPVTFDGDEQARARPITPLLDALRGLGVPVDGVGLPFQVQGSGSVAGGTVAIDASASSQFVSGLLLCAASFTQGVTVQHTGSPVPSAPHIAMTVMMLRQAGVQVDDSVGNRWQVRPGTVAARHWVVEPDLTNAVAFLAAAAVSGGTVRITGWPKTSVQPADNILNILFRLNVVVNQTDSFLEVQGSTVYDGFDVDLRDVGELTPSVAALAALATPGSVSQLHGIAHLRGHETDRLAALSTEINRLGGDCQETSDGLIITATPLRPGVWRAYADHRMAMAGAIVGLRVSGVEVDDIGATHKTLPQFPQLWANMLKRSTG.

3-phosphoshikimate-binding residues include Lys-25, Ser-26, and Arg-30. A phosphoenolpyruvate-binding site is contributed by Lys-25. Phosphoenolpyruvate is bound by residues Gly-98 and Arg-126. 3-phosphoshikimate contacts are provided by Ser-169, Ser-170, Gln-171, Ser-198, Glu-313, and His-342. A phosphoenolpyruvate-binding site is contributed by Gln-171. The Proton acceptor role is filled by Glu-313. Phosphoenolpyruvate is bound by residues Arg-346, Arg-387, and Lys-412.

The protein belongs to the EPSP synthase family. As to quaternary structure, monomer.

The protein resides in the cytoplasm. It catalyses the reaction 3-phosphoshikimate + phosphoenolpyruvate = 5-O-(1-carboxyvinyl)-3-phosphoshikimate + phosphate. It functions in the pathway metabolic intermediate biosynthesis; chorismate biosynthesis; chorismate from D-erythrose 4-phosphate and phosphoenolpyruvate: step 6/7. Catalyzes the transfer of the enolpyruvyl moiety of phosphoenolpyruvate (PEP) to the 5-hydroxyl of shikimate-3-phosphate (S3P) to produce enolpyruvyl shikimate-3-phosphate and inorganic phosphate. This Mycobacterium leprae (strain TN) protein is 3-phosphoshikimate 1-carboxyvinyltransferase.